Here is a 415-residue protein sequence, read N- to C-terminus: Histidine--tRNA ligase (415 aa).

This sequence belongs to the class-II aminoacyl-tRNA synthetase family. In terms of assembly, homodimer.

The protein resides in the cytoplasm. It carries out the reaction tRNA(His) + L-histidine + ATP = L-histidyl-tRNA(His) + AMP + diphosphate + H(+). The sequence is that of Histidine--tRNA ligase from Phytoplasma australiense.